Reading from the N-terminus, the 622-residue chain is MALLQISEPGMAPAPHQRRLAVGIDLGTTNSLVAAVRNSIPEALPDDAGRVLLPSVVRYLDKGGRRIGHAAKEEAAIDPRNTIVSVKRFMGRGKAEVEGAANAPYEFVDAPGMVQIRTVDGVKSPVEVSAEILATLRQRAEDTLGDDLVGAVITVPAYFDDAQRQATKDAARLAGLNVLRLLNEPTAAAIAYGLDNGAEGLYAVYDLGGGTFDLSILKLTKGVFEVLAAGGDSALGGDDFDHLLFEHVLAQAGLEAAALAPEDVRLLLDRVRGAKEALSAAPQARVDVKLSTGEKLAQTITRDTFAALVEPLVQRTLGPTRKALRDAQVSAADIKGVVLVGGATRMPVIRDAVAKYFGQPPLVNLDPDQVVALGAAIQADLLAGNRSGGDDWLLLDVIPLSLGVETMGGLVEKIIPRNSTIPVARAQEFTTFKDGQTAMAIHVVQGERELVSDCRSLARFELRGIPPMTAGAARIRVTYQVDADGLLSVFAREQHSGVEASVVVKPSYGLGDDDIARMLEDSFKTAEVDMRARALREAQVEAQRLVEATEAALVADGDLLDASERATVDALVVSLRALAPGDDADAIDAATKALAEGTDEFAARRMDKSIKRALAGRKLDEI.

It belongs to the heat shock protein 70 family.

Functionally, chaperone involved in the maturation of iron-sulfur cluster-containing proteins. Has a low intrinsic ATPase activity which is markedly stimulated by HscB. This chain is Chaperone protein HscA homolog, found in Burkholderia pseudomallei (strain 1710b).